The sequence spans 159 residues: Small ribosomal subunit protein uS9 (159 aa).

It belongs to the universal ribosomal protein uS9 family.

This Rickettsia rickettsii (strain Iowa) protein is Small ribosomal subunit protein uS9.